The sequence spans 260 residues: Carbonic anhydrase 2 (260 aa).

S2 carries the post-translational modification N-acetylserine. S2 carries the phosphoserine modification. The Alpha-carbonic anhydrase domain maps to 3 to 259 (HHWGYGEHNG…LKNRQVRVFP (257 aa)). The active-site Proton donor/acceptor is H64. Positions 94, 96, and 119 each coordinate Zn(2+). S165 and S172 each carry phosphoserine. 198 to 199 (TN) serves as a coordination point for substrate.

The protein belongs to the alpha-carbonic anhydrase family. As to quaternary structure, interacts with SLC4A4 and SLC26A6. Interaction with SLC4A7 regulates SLC4A7 transporter activity. Zn(2+) is required as a cofactor.

It is found in the cytoplasm. The protein localises to the cell membrane. The catalysed reaction is hydrogencarbonate + H(+) = CO2 + H2O. It catalyses the reaction urea = cyanamide + H2O. With respect to regulation, inhibited by acetazolamide. Its function is as follows. Catalyzes the reversible hydration of carbon dioxide. Can also hydrate cyanamide to urea. Involved in the regulation of fluid secretion into the anterior chamber of the eye. Essential for bone resorption and osteoclast differentiation. Contributes to intracellular pH regulation in the duodenal upper villous epithelium during proton-coupled peptide absorption. Stimulates the chloride-bicarbonate exchange activity of SLC26A6. The sequence is that of Carbonic anhydrase 2 (CA2) from Ovis aries (Sheep).